A 549-amino-acid chain; its full sequence is Glucoamylase, intracellular sporulation-specific (549 aa).

Tryptophan 198 lines the substrate pocket. Aspartate 261 functions as the Proton acceptor in the catalytic mechanism. The active-site Proton donor is the glutamate 264.

It belongs to the glycosyl hydrolase 15 family.

The enzyme catalyses Hydrolysis of terminal (1-&gt;4)-linked alpha-D-glucose residues successively from non-reducing ends of the chains with release of beta-D-glucose.. The protein is Glucoamylase, intracellular sporulation-specific (SGA1) of Saccharomyces cerevisiae (strain ATCC 204508 / S288c) (Baker's yeast).